We begin with the raw amino-acid sequence, 344 residues long: Acireductone dioxygenase (344 aa).

The Fe(2+) site is built by His92, His94, Glu98, and His137. Ni(2+)-binding residues include His92, His94, Glu98, and His137.

This sequence belongs to the acireductone dioxygenase (ARD) family. Requires Fe(2+) as cofactor. Ni(2+) serves as cofactor.

The protein localises to the cytoplasm. Its subcellular location is the nucleus. The enzyme catalyses 1,2-dihydroxy-5-(methylsulfanyl)pent-1-en-3-one + O2 = 4-methylsulfanyl-2-oxobutanoate + formate + 2 H(+). The catalysed reaction is 1,2-dihydroxy-5-(methylsulfanyl)pent-1-en-3-one + O2 = 3-(methylsulfanyl)propanoate + CO + formate + 2 H(+). The protein operates within amino-acid biosynthesis; L-methionine biosynthesis via salvage pathway; L-methionine from S-methyl-5-thio-alpha-D-ribose 1-phosphate: step 5/6. In terms of biological role, catalyzes 2 different reactions between oxygen and the acireductone 1,2-dihydroxy-3-keto-5-methylthiopentene (DHK-MTPene) depending upon the metal bound in the active site. Fe-containing acireductone dioxygenase (Fe-ARD) produces formate and 2-keto-4-methylthiobutyrate (KMTB), the alpha-ketoacid precursor of methionine in the methionine recycle pathway. Ni-containing acireductone dioxygenase (Ni-ARD) produces methylthiopropionate, carbon monoxide and formate, and does not lie on the methionine recycle pathway. The polypeptide is Acireductone dioxygenase (Leishmania infantum).